The sequence spans 205 residues: Recombination protein RecR (205 aa).

The C4-type zinc finger occupies 60 to 75 (CKVCHNISDTETCQIC). Residues 83–178 (SMVCVVENIR…KLSVLARGVS (96 aa)) form the Toprim domain.

It belongs to the RecR family.

In terms of biological role, may play a role in DNA repair. It seems to be involved in an RecBC-independent recombinational process of DNA repair. It may act with RecF and RecO. The protein is Recombination protein RecR of Bacteroides fragilis (strain ATCC 25285 / DSM 2151 / CCUG 4856 / JCM 11019 / LMG 10263 / NCTC 9343 / Onslow / VPI 2553 / EN-2).